The primary structure comprises 458 residues: SH2 domain-containing protein 7 (458 aa).

Residues 51-142 (WFHGFITRKQ…PFGETLAAAC (92 aa)) form the SH2 domain. Disordered regions lie at residues 204 to 235 (RSVS…SPAG) and 267 to 326 (AGSL…TLGS). Positions 278-288 (PSGKLSDEDQN) are enriched in basic and acidic residues. A compositionally biased stretch (polar residues) spans 304 to 326 (QGSTMPYTSLGFSLPPSSETLGS).

In Mus musculus (Mouse), this protein is SH2 domain-containing protein 7 (Sh2d7).